Reading from the N-terminus, the 317-residue chain is Melanocyte-stimulating hormone receptor (317 aa).

Residues 1–37 lie on the Extracellular side of the membrane; it reads MPIHGAPRKLLGSLNSTPTATPKLGLAANHTGAPCLE. Asn29 is a glycosylation site (N-linked (GlcNAc...) asparagine). Residues 38 to 63 form a helical membrane-spanning segment; it reads VSIPDGLFLSLGLVSLVENVLVVAAI. Topologically, residues 64-72 are cytoplasmic; the sequence is AKNRNLHSP. A helical membrane pass occupies residues 73–93; the sequence is MYCFICCLALSDLLVSGSNML. Residues 94 to 118 lie on the Extracellular side of the membrane; that stretch reads EMAVVLLLEGGALATRASVVQQLHN. Residues 119-140 traverse the membrane as a helical segment; sequence TIDVLTCSSMLCSLCFLGAIAV. Topologically, residues 141 to 163 are cytoplasmic; that stretch reads DRHISIFYALRYHSIMTLPRAQR. Residues 164–183 form a helical membrane-spanning segment; sequence VIAAIWVASILSSTLFITYY. The Extracellular segment spans residues 184–191; sequence DHAAVLLC. A helical transmembrane segment spans residues 192 to 211; sequence LVVFFLAMLVLMAVLYVHML. The Cytoplasmic portion of the chain corresponds to 212–240; the sequence is ARACQHAQGITRLHKRQPPAHQGFGLRGA. The helical transmembrane segment at 241–266 threads the bilayer; it reads ATLTILLGIFFLCWGPFFLHLKLVVF. Over 267-279 the chain is Extracellular; sequence CPQHLTCSCIFKN. The helical transmembrane segment at 280–300 threads the bilayer; it reads FKVFLTLIICNTIIDPLIYAF. Topologically, residues 301-317 are cytoplasmic; that stretch reads RSQELRRTLKEVLLCSW. A lipid anchor (S-palmitoyl cysteine) is attached at Cys315.

This sequence belongs to the G-protein coupled receptor 1 family. Interacts with MGRN1, but does not undergo MGRN1-mediated ubiquitination; this interaction competes with GNAS-binding and thus inhibits agonist-induced cAMP production. Interacts with OPN3; the interaction results in a decrease in MC1R-mediated cAMP signaling and ultimately a decrease in melanin production in melanocytes.

It is found in the cell membrane. Functionally, receptor for MSH (alpha, beta and gamma) and ACTH. The activity of this receptor is mediated by G proteins which activate adenylate cyclase. Mediates melanogenesis, the production of eumelanin (black/brown) and phaeomelanin (red/yellow), via regulation of cAMP signaling in melanocytes. This is Melanocyte-stimulating hormone receptor (MC1R) from Saimiri oerstedii (Central American squirrel monkey).